Here is a 316-residue protein sequence, read N- to C-terminus: ATP synthase gamma chain (316 aa).

This sequence belongs to the ATPase gamma chain family. F-type ATPases have 2 components, CF(1) - the catalytic core - and CF(0) - the membrane proton channel. CF(1) has five subunits: alpha(3), beta(3), gamma(1), delta(1), epsilon(1). CF(0) has three main subunits: a, b and c.

The protein localises to the cellular thylakoid membrane. Its function is as follows. Produces ATP from ADP in the presence of a proton gradient across the membrane. The gamma chain is believed to be important in regulating ATPase activity and the flow of protons through the CF(0) complex. The chain is ATP synthase gamma chain from Parasynechococcus marenigrum (strain WH8102).